Here is a 414-residue protein sequence, read N- to C-terminus: 25-hydroxycholesterol 7-alpha-hydroxylase (414 aa).

Residue C354 participates in heme binding.

Belongs to the cytochrome P450 family. It depends on heme as a cofactor. In terms of tissue distribution, highly expressed in brain; also expressed in liver and kidney.

It localises to the endoplasmic reticulum membrane. The protein localises to the microsome membrane. It carries out the reaction 25-hydroxycholesterol + reduced [NADPH--hemoprotein reductase] + O2 = 7alpha,25-dihydroxycholesterol + oxidized [NADPH--hemoprotein reductase] + H2O + H(+). The enzyme catalyses (25R)-cholest-5-ene-3beta,26-diol + reduced [NADPH--hemoprotein reductase] + O2 = (25R)-cholest-5-en-3beta,7alpha,26-triol + oxidized [NADPH--hemoprotein reductase] + H2O + H(+). It functions in the pathway lipid metabolism; bile acid biosynthesis. Functionally, oxysterol 7alpha-hydroxylase that mediates formation of 7-alpha,25-dihydroxycholesterol (7-alpha,25-OHC) from 25-hydroxycholesterol. Plays a key role in cell positioning and movement in lymphoid tissues: 7-alpha,25-dihydroxycholesterol (7-alpha,25-OHC) acts as a ligand for the G protein-coupled receptor GPR183/EBI2, a chemotactic receptor for a number of lymphoid cells. This is 25-hydroxycholesterol 7-alpha-hydroxylase (Cyp7b1) from Rattus norvegicus (Rat).